Here is an 877-residue protein sequence, read N- to C-terminus: Dolichyl-phosphate-mannose--protein mannosyltransferase 1 (877 aa).

An N-linked (GlcNAc...) asparagine glycan is attached at Asn83. 2 helical membrane passes run 109 to 129 and 150 to 170; these read FFMD…GAIG and YIFM…LCYL. The N-linked (GlcNAc...) asparagine glycan is linked to Asn195. The next 4 membrane-spanning stretches (helical) occupy residues 196-216, 226-246, 252-272, and 291-311; these read VTIS…AAAI, IPFT…LGLA, VGLF…WFLI, and IILL…HFQL. One can recognise an MIR 1 domain in the interval 340-394; the sequence is TEQVGLGSVVTIRHVDTQGGYLHSHEHFYQTGSKQQQITLYPHLDSNNKWLIEPY. 2 N-linked (GlcNAc...) asparagine glycosylation sites follow: Asn395 and Asn400. MIR domains lie at 403–462 and 472–528; these read FVPL…VEIV and QTFV…IETN. 4 helical membrane-spanning segments follow: residues 604–624, 643–663, 666–686, and 700–720; these read TWWA…VTVF, VQTF…FIMG, LFLH…GHFF, and FQQV…VFYV. N-linked (GlcNAc...) asparagine glycosylation occurs at Asn721. The interval 778 to 877 is disordered; sequence VVEAKQTPKA…EDESVHQVQQ (100 aa). 3 stretches are compositionally biased toward basic and acidic residues: residues 783 to 799, 807 to 816, and 847 to 857; these read QTPK…DHIE, VEEKEVKEEV, and NDEKSVEEKQQ.

The protein belongs to the glycosyltransferase 39 family. PMT1 and PMT2 form a functional heterodimer.

It localises to the endoplasmic reticulum membrane. It catalyses the reaction a di-trans,poly-cis-dolichyl beta-D-mannosyl phosphate + L-seryl-[protein] = 3-O-(alpha-D-mannosyl)-L-seryl-[protein] + a di-trans,poly-cis-dolichyl phosphate + H(+). The catalysed reaction is a di-trans,poly-cis-dolichyl beta-D-mannosyl phosphate + L-threonyl-[protein] = 3-O-(alpha-D-mannosyl)-L-threonyl-[protein] + a di-trans,poly-cis-dolichyl phosphate + H(+). The protein operates within protein modification; protein glycosylation. Functionally, protein mannosyltransferase (PMT) involved in hyphal growth and drug sensitivity. Transfers mannose from Dol-P-mannose to Ser or Thr residues on proteins. PMT1, PMT2 and PMT4 account for most of the protein-O-glycosylation activity, while PMT5 and PMT6 may specifically modulate a much narrower spectrum of target proteins. Accounts for the O-glycosylation of the cell wall proteins KRE9, PIR2, RHD3, and ALS1, as well as the SEC20 t-SNARE component. O-glycosylation of SEC20 is essential for its stability. Required for filamentation and early phases of biofilm formation. The chain is Dolichyl-phosphate-mannose--protein mannosyltransferase 1 (PMT1) from Candida albicans (strain SC5314 / ATCC MYA-2876) (Yeast).